The primary structure comprises 266 residues: Glutamate racemase (266 aa).

Residues Asp-9–Ser-10 and Tyr-41–Gly-42 contribute to the substrate site. Cys-72 acts as the Proton donor/acceptor in catalysis. Substrate is bound at residue Asn-73–Thr-74. Catalysis depends on Cys-184, which acts as the Proton donor/acceptor. Position 185–186 (Thr-185–His-186) interacts with substrate.

The protein belongs to the aspartate/glutamate racemases family. As to quaternary structure, homodimer.

It carries out the reaction L-glutamate = D-glutamate. Its pathway is cell wall biogenesis; peptidoglycan biosynthesis. Its function is as follows. Provides the (R)-glutamate required for cell wall biosynthesis. The sequence is that of Glutamate racemase from Staphylococcus aureus (strain MRSA252).